A 354-amino-acid chain; its full sequence is Uptake hydrogenase small subunit (354 aa).

The tat-type signal signal peptide spans 1–44 (MSQLETXYDVMRRQGITRRSFLKYCSLTGRPCLGPTFAPQIAHA). 8 residues coordinate [4Fe-4S] cluster: Cys61, Cys64, Cys156, Cys190, His228, Ser231, Cys256, and Cys262. [3Fe-4S] cluster contacts are provided by Cys271, Cys290, and Cys293.

This sequence belongs to the [NiFe]/[NiFeSe] hydrogenase small subunit family. As to quaternary structure, heterodimer of a large and a small subunit. Requires [4Fe-4S] cluster as cofactor. The cofactor is [3Fe-4S] cluster. In terms of processing, predicted to be exported by the Tat system. The position of the signal peptide cleavage has not been experimentally proven.

It localises to the cell membrane. The enzyme catalyses H2 + A = AH2. Functionally, this enzyme recycles the H(2) produced by nitrogenase to increase the production of ATP and to protect nitrogenase against inhibition or damage by O(2) under carbon- or phosphate-limited conditions. The chain is Uptake hydrogenase small subunit (hupA) from Azotobacter chroococcum mcd 1.